The chain runs to 431 residues: 3-phosphoshikimate 1-carboxyvinyltransferase (431 aa).

Positions 21, 22, and 26 each coordinate 3-phosphoshikimate. Lys-21 serves as a coordination point for phosphoenolpyruvate. Residues Gly-93 and Arg-121 each coordinate phosphoenolpyruvate. Ser-166, Gln-168, Ser-192, Asp-317, and Lys-344 together coordinate 3-phosphoshikimate. Gln-168 provides a ligand contact to phosphoenolpyruvate. Asp-317 functions as the Proton acceptor in the catalytic mechanism. Residues Arg-348 and Arg-390 each coordinate phosphoenolpyruvate.

This sequence belongs to the EPSP synthase family. Monomer.

It localises to the cytoplasm. The enzyme catalyses 3-phosphoshikimate + phosphoenolpyruvate = 5-O-(1-carboxyvinyl)-3-phosphoshikimate + phosphate. Its pathway is metabolic intermediate biosynthesis; chorismate biosynthesis; chorismate from D-erythrose 4-phosphate and phosphoenolpyruvate: step 6/7. In terms of biological role, catalyzes the transfer of the enolpyruvyl moiety of phosphoenolpyruvate (PEP) to the 5-hydroxyl of shikimate-3-phosphate (S3P) to produce enolpyruvyl shikimate-3-phosphate and inorganic phosphate. This chain is 3-phosphoshikimate 1-carboxyvinyltransferase, found in Herpetosiphon aurantiacus (strain ATCC 23779 / DSM 785 / 114-95).